Here is a 403-residue protein sequence, read N- to C-terminus: Malate dehydrogenase, chloroplastic (403 aa).

Residues 1–80 (MATATSASLF…DKKPYGFKIN (80 aa)) constitute a chloroplast transit peptide. Residues 89–95 (GAAGGIG) and D115 each bind NAD(+). Substrate is bound by residues R162 and R168. Residues N175 and 198–200 (ISN) contribute to the NAD(+) site. Substrate contacts are provided by N200 and R234. Residue H258 is the Proton acceptor of the active site. M309 is a binding site for NAD(+).

This sequence belongs to the LDH/MDH superfamily. MDH type 1 family. Homodimer. As to expression, expressed in rosette leaves. Expressed in meristematic regions of roots and shoots, cotyledons, young leaves, trichomes, stamen, pollen, tapetum, gynoecium and ovules.

The protein resides in the plastid. The protein localises to the chloroplast stroma. It carries out the reaction (S)-malate + NAD(+) = oxaloacetate + NADH + H(+). In terms of biological role, catalyzes a reversible NAD-dependent dehydrogenase reaction involved in central metabolism and redox homeostasis between organelle compartments. Plays a key role in the metabolism of dark chloroplasts and non-green plastids. Essential for embryo viability. Plays an essential role in heterotrophic metabolism in embryos, and autotrophic metabolism in photosynthetic tissues as well. The polypeptide is Malate dehydrogenase, chloroplastic (Arabidopsis thaliana (Mouse-ear cress)).